The following is a 367-amino-acid chain: Uroporphyrinogen decarboxylase (367 aa).

Met-1 bears the N-acetylmethionine mark. Residues Arg-37, Ala-39, Arg-41, Arg-50, Asp-86, Tyr-164, Ser-219, and His-339 each contribute to the coproporphyrinogen I site. Residues Arg-37, Ala-39, and Arg-41 each coordinate coproporphyrinogen III. Coproporphyrinogen III-binding residues include Asp-86, Tyr-164, Ser-219, and His-339.

The protein belongs to the uroporphyrinogen decarboxylase family. In terms of assembly, homodimer.

The protein localises to the cytoplasm. Its subcellular location is the cytosol. It catalyses the reaction uroporphyrinogen III + 4 H(+) = coproporphyrinogen III + 4 CO2. The catalysed reaction is uroporphyrinogen I + 4 H(+) = coproporphyrinogen I + 4 CO2. The protein operates within porphyrin-containing compound metabolism; protoporphyrin-IX biosynthesis; coproporphyrinogen-III from 5-aminolevulinate: step 4/4. In terms of biological role, catalyzes the sequential decarboxylation of the four acetate side chains of uroporphyrinogen to form coproporphyrinogen and participates in the fifth step in the heme biosynthetic pathway. Isomer I or isomer III of uroporphyrinogen may serve as substrate, but only coproporphyrinogen III can ultimately be converted to heme. In vitro also decarboxylates pentacarboxylate porphyrinogen I. The sequence is that of Uroporphyrinogen decarboxylase from Pongo abelii (Sumatran orangutan).